Reading from the N-terminus, the 106-residue chain is Large ribosomal subunit protein eL42 (106 aa).

Zn(2+) is bound by residues cysteine 12, cysteine 17, cysteine 74, and cysteine 77.

This sequence belongs to the eukaryotic ribosomal protein eL42 family. Component of the large ribosomal subunit. Mature ribosomes consist of a small (40S) and a large (60S) subunit. The 40S subunit contains about 32 different proteins and 1 molecule of RNA (18S). The 60S subunit contains 45 different proteins and 3 molecules of RNA (25S, 5.8S and 5S). Zn(2+) serves as cofactor.

It is found in the cytoplasm. Its function is as follows. Component of the ribosome, a large ribonucleoprotein complex responsible for the synthesis of proteins in the cell. The small ribosomal subunit (SSU) binds messenger RNAs (mRNAs) and translates the encoded message by selecting cognate aminoacyl-transfer RNA (tRNA) molecules. The large subunit (LSU) contains the ribosomal catalytic site termed the peptidyl transferase center (PTC), which catalyzes the formation of peptide bonds, thereby polymerizing the amino acids delivered by tRNAs into a polypeptide chain. The nascent polypeptides leave the ribosome through a tunnel in the LSU and interact with protein factors that function in enzymatic processing, targeting, and the membrane insertion of nascent chains at the exit of the ribosomal tunnel. In Candida albicans (strain SC5314 / ATCC MYA-2876) (Yeast), this protein is Large ribosomal subunit protein eL42 (RPL44).